Here is a 353-residue protein sequence, read N- to C-terminus: uncharacterized protein (353 aa).

An HTH luxR-type domain is found at 18–83; that stretch reads NIEFPCLLSE…TLWRDVFLRF (66 aa). A DNA-binding region (H-T-H motif) is located at residues 42–61; the sequence is VNEISKRRNRSIKTVSCQKM. The EAL domain occupies 98–350; sequence NSSVLPVVSS…AFVRKLLASL (253 aa).

This is an uncharacterized protein from Escherichia coli (strain K12).